Here is a 316-residue protein sequence, read N- to C-terminus: tRNA dimethylallyltransferase (316 aa).

17-24 (GPTASGKT) contacts ATP. Residue 19–24 (TASGKT) participates in substrate binding. 4 interaction with substrate tRNA regions span residues 42 to 45 (DSAL), 166 to 170 (QRLSR), 247 to 252 (RCVGYR), and 280 to 287 (KRQITWLR).

The protein belongs to the IPP transferase family. In terms of assembly, monomer. Requires Mg(2+) as cofactor.

It carries out the reaction adenosine(37) in tRNA + dimethylallyl diphosphate = N(6)-dimethylallyladenosine(37) in tRNA + diphosphate. In terms of biological role, catalyzes the transfer of a dimethylallyl group onto the adenine at position 37 in tRNAs that read codons beginning with uridine, leading to the formation of N6-(dimethylallyl)adenosine (i(6)A). The protein is tRNA dimethylallyltransferase of Escherichia coli O157:H7.